The chain runs to 1079 residues: DNA annealing helicase and endonuclease ZRANB3 (1079 aa).

The Helicase ATP-binding domain maps to 46-208; sequence IFALKRNGRC…FMQIEALFPQ (163 aa). The tract at residues 46 to 481 is DNA annealing helicase activity; that stretch reads IFALKRNGRC…GRKEKIQAEE (436 aa). 59–66 contributes to the ATP binding site; the sequence is DEMGLGKT. A DEAH box motif is present at residues 157–160; it reads DESH. Residues 325-481 form the Helicase C-terminal domain; sequence AVKDYIKMML…GRKEKIQAEE (157 aa). Residues 519-526 carry the PIP-box motif; that stretch reads QHDIRSFF. Position 569 is a phosphoserine (serine 569). Residues 582 to 601 form a disordered region; sequence ASEDHCSPSEETPSQSKQIR. Over residues 590 to 600 the composition is skewed to polar residues; that stretch reads SEETPSQSKQI. The RanBP2-type zinc finger occupies 621–650; it reads PVEGWQCSLCTYINNSELPYCEMCETPQGS. Cysteine 630 carries the (Microbial infection) S-methylcysteine modification. The disordered stretch occupies residues 689–725; that stretch reads LAQSEPGQLADSKEETPKIEKEDGLTSQPGNEQWKSS. The span at 699-712 shows a compositional bias: basic and acidic residues; sequence DSKEETPKIEKEDG. Residues 713–725 are compositionally biased toward polar residues; the sequence is LTSQPGNEQWKSS. The HNH domain occupies 1011-1051; that stretch reads PGEGHFWQVDHIKPVYGGGGQCSLDNLQTLCTVCHKERTAR. The tract at residues 1011–1079 is endonuclease activity; it reads PGEGHFWQVD…SDITRFLVKK (69 aa). Positions 1074 to 1078 match the APIM motif motif; it reads RFLVK.

The protein belongs to the SNF2/RAD54 helicase family. In terms of assembly, interacts (via PIP-box and RanBP2-type zinc finger) with PCNA (when PCNA is polyubiquitinated via 'Lys-63'-linked polyubiquitin). (Microbial infection) Methylation at Cys-630 by enteropathogenic E.coli protein NleE or S.flexneri protein OspZ: methylation disrupts ability to bind 'Lys-63'-linked ubiquitin.

It is found in the nucleus. The protein localises to the chromosome. Functionally, DNA annealing helicase and endonuclease required to maintain genome stability at stalled or collapsed replication forks by facilitating fork restart and limiting inappropriate recombination that could occur during template switching events. Recruited to the sites of stalled DNA replication by polyubiquitinated PCNA and acts as a structure-specific endonuclease that cleaves the replication fork D-loop intermediate, generating an accessible 3'-OH group in the template of the leading strand, which is amenable to extension by DNA polymerase. In addition to endonuclease activity, also catalyzes the fork regression via annealing helicase activity in order to prevent disintegration of the replication fork and the formation of double-strand breaks. In Homo sapiens (Human), this protein is DNA annealing helicase and endonuclease ZRANB3.